Reading from the N-terminus, the 404-residue chain is Dihydrolipoyllysine-residue acetyltransferase component of pyruvate dehydrogenase complex (404 aa).

Residues 2 to 78 (PIKILMPALS…PVNSLIAVLS (77 aa)) form the Lipoyl-binding domain. Lysine 43 carries the N6-lipoyllysine modification. One can recognise a Peripheral subunit-binding (PSBD) domain in the interval 128–165 (FASPLAKRLAKIRNIRLESVQGSGPHGRIVKQDILSYS). Histidine 377 is a catalytic residue.

The protein belongs to the 2-oxoacid dehydrogenase family. Forms a 24-polypeptide structural core with octahedral symmetry. It depends on (R)-lipoate as a cofactor.

The enzyme catalyses N(6)-[(R)-dihydrolipoyl]-L-lysyl-[protein] + acetyl-CoA = N(6)-[(R)-S(8)-acetyldihydrolipoyl]-L-lysyl-[protein] + CoA. Functionally, the pyruvate dehydrogenase complex catalyzes the overall conversion of pyruvate to acetyl-CoA and CO(2). It contains multiple copies of three enzymatic components: pyruvate dehydrogenase (E1), dihydrolipoamide acetyltransferase (E2) and lipoamide dehydrogenase (E3). In Rickettsia typhi (strain ATCC VR-144 / Wilmington), this protein is Dihydrolipoyllysine-residue acetyltransferase component of pyruvate dehydrogenase complex (pdhC).